Here is a 790-residue protein sequence, read N- to C-terminus: Nuclear cap-binding protein subunit 1 (790 aa).

The disordered stretch occupies residues 1-26; that stretch reads MSRRRHSYENDGGQPHKRRKTSDANE. The Nuclear localization signal signature appears at 3 to 20; it reads RRRHSYENDGGQPHKRRK. Serine 7 is modified (phosphoserine). A Phosphothreonine modification is found at threonine 21. Phosphoserine occurs at positions 22 and 201. Positions 28–240 constitute an MIF4G domain; the sequence is EDHLESLICK…CLWAQIQKLK (213 aa). Residue lysine 204 is modified to N6-acetyllysine. Positions 643-713 form a coiled coil; it reads STIRKMNKHV…SEQKNLFLVI (71 aa). Residues 666–685 are disordered; that stretch reads LARQHKRRSDDDDRSSDRKD. Lysine 684 participates in a covalent cross-link: Glycyl lysine isopeptide (Lys-Gly) (interchain with G-Cter in SUMO2). N6-acetyllysine is present on lysine 698.

The protein belongs to the NCBP1 family. As to quaternary structure, component of the nuclear cap-binding complex (CBC), a heterodimer composed of NCBP1/CBP80 and NCBP2/CBP20 that interacts with m7GpppG-capped RNA. Found in a U snRNA export complex containing PHAX/RNUXA, NCBP1/CBP80, NCBP2/CBP20, RAN, XPO1 and m7G-capped RNA. Identified in a IGF2BP1-dependent mRNP granule complex containing untranslated mRNAs. Interacts with PHAX/RNUXA, SRRT/ARS2, EIF4G2, IGF2BP1, HNRNPF, HNRNPH1, KIAA0427/CTIF, PARN, DROSHA, UPF1 and ALYREF/THOC4. May interact with EIF4G1; the interaction is however controversial. The large PER complex involved in the repression of transcriptional termination is composed of at least PER2, CDK9, DDX5, DHX9, NCBP1/CBP80 and POLR2A (active). Component of an alternative nuclear cap-binding complex (CBC) composed of NCBP1/CBP80 and NCBP3. Interacts with METTL3. Interacts with ZFC3H1 in a RNase-insensitive manner. Interacts with MTREX. Interacts with TASOR. Interacts with DHX34; the interaction is RNA-dependent. Interacts with KPNA3. Dephosphorylated at Thr-21 by the PNUTS-PP1 complex during RNA polymerase II transcription pause-release. In terms of tissue distribution, expressed in the spermatogonia, spermatocytes and granular cells within the cerebellum.

It localises to the nucleus. It is found in the cytoplasm. In terms of biological role, component of the cap-binding complex (CBC), which binds cotranscriptionally to the 5'-cap of pre-mRNAs and is involved in various processes such as pre-mRNA splicing, translation regulation, nonsense-mediated mRNA decay, RNA-mediated gene silencing (RNAi) by microRNAs (miRNAs) and mRNA export. The CBC complex is involved in mRNA export from the nucleus via its interaction with ALYREF/THOC4/ALY, leading to the recruitment of the mRNA export machinery to the 5'-end of mRNA and to mRNA export in a 5' to 3' direction through the nuclear pore. The CBC complex is also involved in mediating U snRNA and intronless mRNAs export from the nucleus. The CBC complex is essential for a pioneer round of mRNA translation, before steady state translation when the CBC complex is replaced by cytoplasmic cap-binding protein eIF4E. The pioneer round of mRNA translation mediated by the CBC complex plays a central role in nonsense-mediated mRNA decay (NMD), NMD only taking place in mRNAs bound to the CBC complex, but not on eIF4E-bound mRNAs. The CBC complex enhances NMD in mRNAs containing at least one exon-junction complex (EJC) via its interaction with UPF1, promoting the interaction between UPF1 and UPF2. The CBC complex is also involved in 'failsafe' NMD, which is independent of the EJC complex, while it does not participate in Staufen-mediated mRNA decay (SMD). During cell proliferation, the CBC complex is also involved in microRNAs (miRNAs) biogenesis via its interaction with SRRT/ARS2 and is required for miRNA-mediated RNA interference. The CBC complex also acts as a negative regulator of PARN, thereby acting as an inhibitor of mRNA deadenylation. In the CBC complex, NCBP1/CBP80 does not bind directly capped RNAs (m7GpppG-capped RNA) but is required to stabilize the movement of the N-terminal loop of NCBP2/CBP20 and lock the CBC into a high affinity cap-binding state with the cap structure. Associates with NCBP3 to form an alternative cap-binding complex (CBC) which plays a key role in mRNA export and is particularly important in cellular stress situations such as virus infections. The conventional CBC with NCBP2 binds both small nuclear RNA (snRNA) and messenger (mRNA) and is involved in their export from the nucleus whereas the alternative CBC with NCBP3 does not bind snRNA and associates only with mRNA thereby playing a role only in mRNA export. NCBP1/CBP80 is required for cell growth and viability. The protein is Nuclear cap-binding protein subunit 1 (Ncbp1) of Mus musculus (Mouse).